A 410-amino-acid polypeptide reads, in one-letter code: Peptidase T (410 aa).

H79 contacts Zn(2+). The active site involves D81. Position 142 (D142) interacts with Zn(2+). E176 serves as the catalytic Proton acceptor. Zn(2+) is bound by residues E177, D199, and H381.

This sequence belongs to the peptidase M20B family. Requires Zn(2+) as cofactor.

The protein resides in the cytoplasm. The enzyme catalyses Release of the N-terminal residue from a tripeptide.. Functionally, cleaves the N-terminal amino acid of tripeptides. The sequence is that of Peptidase T from Bacillus cereus (strain B4264).